The following is a 381-amino-acid chain: KRR1 small subunit processome component homolog (381 aa).

Residues 1–51 (MASPSLERPEKGAGKSEFRNQKPKPENQDESELLTVPDGWKEPAFSKEDNP) are disordered. Alanine 2 is subject to N-acetylalanine. Residues serine 3 and serine 5 each carry the phosphoserine modification. Basic and acidic residues-rich tracts occupy residues 7-27 (ERPE…KPEN) and 39-51 (GWKE…EDNP). Lysine 24 is covalently cross-linked (Glycyl lysine isopeptide (Lys-Gly) (interchain with G-Cter in SUMO2)). The 53-residue stretch at 154 to 206 (KERFVKRRQRLIGPKGSTLKALELLTNCYIMVQGNTVSAIGPFSGLKEVRKVV) folds into the KH domain. A compositionally biased stretch (basic residues) spans 250-262 (NVNKRKEPKKKTV). 2 disordered regions span residues 250–278 (NVNK…ESQI) and 309–338 (AISK…ASTE). Glycyl lysine isopeptide (Lys-Gly) (interchain with G-Cter in SUMO2) cross-links involve residues lysine 340 and lysine 369.

This sequence belongs to the KRR1 family. Part of the small subunit (SSU) processome, composed of more than 70 proteins and the RNA chaperone small nucleolar RNA (snoRNA) U3. In terms of assembly, (Microbial infection) Directly interacts with HIV-1 protein VPR. Also identified in a complex with NR3C1 and HIV-1 protein VPR.

It localises to the nucleus. It is found in the nucleolus. The protein localises to the cytoplasm. Part of the small subunit (SSU) processome, first precursor of the small eukaryotic ribosomal subunit. During the assembly of the SSU processome in the nucleolus, many ribosome biogenesis factors, an RNA chaperone and ribosomal proteins associate with the nascent pre-rRNA and work in concert to generate RNA folding, modifications, rearrangements and cleavage as well as targeted degradation of pre-ribosomal RNA by the RNA exosome. The protein is KRR1 small subunit processome component homolog of Homo sapiens (Human).